A 217-amino-acid polypeptide reads, in one-letter code: Oxygen-evolving enhancer protein 3-1, chloroplastic (217 aa).

Residues 1-68 (MAQAMASMTG…GGALSQAARA (68 aa)) constitute a chloroplast transit peptide.

This sequence belongs to the PsbQ family.

The protein resides in the plastid. The protein localises to the chloroplast thylakoid membrane. The sequence is that of Oxygen-evolving enhancer protein 3-1, chloroplastic (PSBQ1) from Zea mays (Maize).